The primary structure comprises 302 residues: uncharacterized protein (302 aa).

Disordered regions lie at residues 1-167 (MPCR…QSSE) and 180-199 (PSLCPSQTGTASTASPQRAS). A compositionally biased stretch (basic and acidic residues) spans 39 to 54 (EESHAPSRDPRDHQGS). 2 stretches are compositionally biased toward polar residues: residues 123–133 (LSTSSCASVSR) and 183–197 (CPSQTGTASTASPQR).

This is an uncharacterized protein from Homo sapiens (Human).